A 450-amino-acid polypeptide reads, in one-letter code: DNA primase DnaG (450 aa).

The 75-residue stretch at 199–273 (DSIIVVEGRA…DVDYVARAPE (75 aa)) folds into the Toprim domain. 3 residues coordinate Mg(2+): Glu-205, Asp-247, and Asp-249. Positions 320 to 348 (APSKEVKPAPKHEPKPQPVEQKPREEKII) are enriched in basic and acidic residues. A disordered region spans residues 320 to 350 (APSKEVKPAPKHEPKPQPVEQKPREEKIIRP).

Belongs to the archaeal DnaG primase family. Forms a ternary complex with MCM helicase and DNA. Component of the archaeal exosome complex. The cofactor is Mg(2+).

The enzyme catalyses ssDNA + n NTP = ssDNA/pppN(pN)n-1 hybrid + (n-1) diphosphate.. In terms of biological role, RNA polymerase that catalyzes the synthesis of short RNA molecules used as primers for DNA polymerase during DNA replication. Also part of the exosome, which is a complex involved in RNA degradation. Acts as a poly(A)-binding protein that enhances the interaction between heteromeric, adenine-rich transcripts and the exosome. This Thermococcus gammatolerans (strain DSM 15229 / JCM 11827 / EJ3) protein is DNA primase DnaG.